A 459-amino-acid polypeptide reads, in one-letter code: Magnesium transporter MRS2-11, chloroplastic (459 aa).

The N-terminal 62 residues, 1-62 (MALTPIPSTF…EALKVLSRSK (62 aa)), are a transit peptide targeting the chloroplast. The interval 76 to 122 (GDYESLNVSDDDDGSDSNSSDGDNGGGRDDSKKIDSSSSSSSSDSTS) is disordered. The segment covering 101 to 110 (GGRDDSKKID) has biased composition (basic and acidic residues). Residues 111–122 (SSSSSSSSDSTS) show a composition bias toward low complexity. Helical transmembrane passes span 397 to 417 (LLLQVGTFCVAVGALIAGIFG) and 430 to 450 (AFWLTTGGIIIGAAVAFFLMY). The Required for magnesium transport activity signature appears at 417-419 (GMN).

The protein belongs to the CorA metal ion transporter (MIT) (TC 1.A.35.5) family. Expressed in the green part of the plant. Preferentially expressed in the spongy mesophyll cells and stomata of young leaves but also detected in cotyledons and at the base of the leaf petioles.

Its subcellular location is the plastid. It localises to the chloroplast membrane. Its function is as follows. High-affinity magnesium transporter that mediates the influx of magnesium in chloroplast. The polypeptide is Magnesium transporter MRS2-11, chloroplastic (MRS2-11) (Arabidopsis thaliana (Mouse-ear cress)).